Reading from the N-terminus, the 236-residue chain is Methylosome subunit pICln (236 aa).

The interval 1–20 is disordered; that stretch reads MSFLKSFPPPGPTEGLRHQQ. Ser2 carries the N-acetylserine modification. Phosphoserine occurs at positions 101, 143, 192, 194, 197, and 209. Thr222 carries the phosphothreonine modification.

It belongs to the pICln (TC 1.A.47) family. In terms of assembly, component of the methylosome, a 20S complex containing at least PRMT5/SKB1, WDR77/MEP50 and CLNS1A/pICln. May mediate SNRPD1 and SNRPD3 methylation. Forms a 6S pICln-Sm complex composed of CLNS1A/pICln, SNRPD1, SNRPD2, SNRPE, SNRPF and SNRPG; ring-like structure where CLNS1A/pICln mimics additional Sm proteins and which is unable to assemble into the core snRNP. Interacts with LSM10 and LSM11. Widely distributed but expressed more abundantly in nonpigmented ciliary epithelial cells than in pigmented ones.

The protein resides in the cytoplasm. The protein localises to the cytosol. It localises to the nucleus. Its subcellular location is the cytoskeleton. Involved in both the assembly of spliceosomal snRNPs and the methylation of Sm proteins. Chaperone that regulates the assembly of spliceosomal U1, U2, U4 and U5 small nuclear ribonucleoproteins (snRNPs), the building blocks of the spliceosome, and thereby plays an important role in the splicing of cellular pre-mRNAs. Most spliceosomal snRNPs contain a common set of Sm proteins SNRPB, SNRPD1, SNRPD2, SNRPD3, SNRPE, SNRPF and SNRPG that assemble in a heptameric protein ring on the Sm site of the small nuclear RNA to form the core snRNP (Sm core). In the cytosol, the Sm proteins SNRPD1, SNRPD2, SNRPE, SNRPF and SNRPG are trapped in an inactive 6S pICln-Sm complex by the chaperone CLNS1A that controls the assembly of the core snRNP. Dissociation by the SMN complex of CLNS1A from the trapped Sm proteins and their transfer to an SMN-Sm complex triggers the assembly of core snRNPs and their transport to the nucleus. This Oryctolagus cuniculus (Rabbit) protein is Methylosome subunit pICln (CLNS1A).